We begin with the raw amino-acid sequence, 176 residues long: MAESQTGGGGGGSHESGGDQSPRSLNVREQDRFLPIANISRIMKRGLPLNGKIAKDAKETMQECVSEFISFVTSEASDKCQREKRKTINGDDLLWAMATLGFEDYIDPLKVYLMRYREMEGDTKGSGKGGESSAKRDGQPSQVSQFSQVPQQGSFSQGPYGNSQGSNMMVQMPGTE.

Over residues Met-1 to Glu-15 the composition is skewed to gly residues. The tract at residues Met-1–Glu-29 is disordered. Ala-2 carries the post-translational modification N-acetylalanine. A DNA-binding region spans residues Leu-34–Ser-40. The segment at Met-61–Val-72 is subunit association domain (SAD). A disordered region spans residues Gly-121 to Glu-176. Residues Gln-139 to Pro-159 show a composition bias toward low complexity. A compositionally biased stretch (polar residues) spans Tyr-160–Met-169.

The protein belongs to the NFYB/HAP3 subunit family. As to quaternary structure, heterotrimeric transcription factor composed of three components, NF-YA, NF-YB and NF-YC. NF-YB and NF-YC must interact and dimerize for NF-YA association and DNA binding. Expressed in the whole plant, except roots.

The protein resides in the nucleus. In terms of biological role, component of the NF-Y/HAP transcription factor complex. The NF-Y complex stimulates the transcription of various genes by recognizing and binding to a CCAAT motif in promoters. The sequence is that of Nuclear transcription factor Y subunit B-10 (NFYB10) from Arabidopsis thaliana (Mouse-ear cress).